Here is a 311-residue protein sequence, read N- to C-terminus: Pyrimidine-specific ribonucleoside hydrolase RihA (311 aa).

H240 is an active-site residue.

It belongs to the IUNH family. RihA subfamily.

Hydrolyzes cytidine or uridine to ribose and cytosine or uracil, respectively. This is Pyrimidine-specific ribonucleoside hydrolase RihA from Shigella boydii serotype 4 (strain Sb227).